The following is a 360-amino-acid chain: Protein Wnt-2 (360 aa).

Positions 1–37 are cleaved as a signal peptide; that stretch reads MIPRRSCWLILLLNLLNVQSLLDASWWSTVAQLSTAL. Cystine bridges form between cysteine 80-cysteine 91, cysteine 130-cysteine 138, cysteine 140-cysteine 158, cysteine 213-cysteine 227, cysteine 215-cysteine 222, cysteine 289-cysteine 320, cysteine 305-cysteine 315, cysteine 319-cysteine 359, cysteine 335-cysteine 350, cysteine 337-cysteine 347, and cysteine 342-cysteine 343. Asparagine 90 is a glycosylation site (N-linked (GlcNAc...) asparagine). Residue serine 219 is the site of O-palmitoleoyl serine; by mom-1 attachment. N-linked (GlcNAc...) asparagine glycosylation is present at asparagine 352.

The protein belongs to the Wnt family. Palmitoleoylation is required for efficient binding to frizzled receptors. Depalmitoleoylation leads to Wnt signaling pathway inhibition. As to expression, expressed in intestine, pharynx, anterior body wall muscle, vulva, some pharyngeal neurons and SMD head neurons. Expressed along the boundary between the intestine and muscle or hypodermis, but is also expressed in the hypodermis in cells including seam cells.

The protein resides in the secreted. It localises to the extracellular space. It is found in the extracellular matrix. Its function is as follows. Ligand for members of the frizzled family of seven transmembrane receptors. Probable developmental protein. May be a signaling molecule which affects the development of discrete regions of tissues. Is likely to signal over only few cell diameters. Involved in the correct positioning of the developing nerve ring and in axon guidance of SIA and SIB neurons, probably by binding to tyrosine kinase receptor cam-1. In addition, regulates the positioning of some head neuronal cells, muscle arms associated with the nerve ring and the excretory pore. Together with Wnt ligand cwn-1, regulates the migration of CAN, ALM, BDU and HSN neurons during embryogenesis, the migration of QL and QR neuroblast descendants during larval development, and polarity of ALM neurons. May act through the wnt receptor cfz-2 to regulate QR neuroblast descendant migration, and to direct ALM migration. Also plays a role in axon growth and guidance in HSN and male CP neurons. In addition, together with wnt ligand cwn-1, negatively regulates developmental neurite pruning of AIM neurons probably by acting as a ligand for receptor tyrosine kinase cam-1. Through the cam-1 receptor also probably regulates the outgrowth of neurites from RME GABAergic motor neurons. May act redundantly with other Wnt ligands such as cwn-1 and mom-2 to control seam cell polarity. The sequence is that of Protein Wnt-2 from Caenorhabditis elegans.